We begin with the raw amino-acid sequence, 618 residues long: Neurosecretory protein VGF (618 aa).

Positions 1 to 23 are cleaved as a signal peptide; the sequence is MKSLRLPATVLFCLLLLIKGLGA. Disordered stretches follow at residues 23 to 46, 86 to 201, and 219 to 262; these read AAPP…PVAG, VLLQ…LESP, and PERA…GEAL. The span at 26–37 shows a compositional bias: pro residues; the sequence is PGHPEAQPPPPS. The span at 180–195 shows a compositional bias: low complexity; sequence ETAAAETETRTHTLTR. Residues 301-332 are a coiled coil; it reads LAQVEAGRRQAEATRQAAAQEERLADLASDLL. Q310 is modified (pyrrolidone carboxylic acid). Positions 342 to 603 are disordered; that stretch reads RQRGLGGRGL…EAEERRLQEQ (262 aa). The segment covering 356–378 has biased composition (basic and acidic residues); that stretch reads GGGRETARQQEEAEQERRGGEER. The span at 379–395 shows a compositional bias: acidic residues; it reads VGEEDEEAAEAEAEAEE. The span at 416–434 shows a compositional bias: basic and acidic residues; sequence AEDKRSREETPGHRRKEAE. The residue at position 421 (S421) is a Phosphoserine. T425 carries the phosphothreonine modification. Residues 435–451 are compositionally biased toward acidic residues; the sequence is GAEEGGAEDEDDDEEMD. Pro residues predominate over residues 490 to 500; the sequence is PPEPVPPPRAA. A compositionally biased stretch (basic and acidic residues) spans 578 to 602; that stretch reads HYPDREAQARRAQEEAEAEERRLQE.

In terms of processing, multiple peptides are derived from VGF, with activities in synaptic plasticity, antidepression, penile erection, autonomic activation, and increases in energy expenditure.

It is found in the secreted. It localises to the cytoplasmic vesicle. The protein localises to the secretory vesicle. Functionally, secreted polyprotein that is packaged and proteolytically processed by prohormone convertases PCSK1 and PCSK2 in a cell-type-specific manner. VGF and peptides derived from its processing play many roles in neurogenesis and neuroplasticity associated with learning, memory, depression and chronic pain. Plays a role in the control of body fluid homeostasis by regulating vasopressin release. Suppresses presynaptic glutamatergic neurons connected to vasopressin neurons. In terms of biological role, plays a role in the control of body fluid homeostasis by regulating vasopressin release. Activates GABAergic interneurons which are inhibitory neurons of the nervous system and thereby suppresses presynaptic glutamatergic neurons. Also stimulates feeding behavior in an orexin-dependent manner in the hypothalamus. Functions as a positive regulator for the activation of orexin neurons resulting in elevated gastric acid secretion and gastric emptying. The chain is Neurosecretory protein VGF from Bos taurus (Bovine).